The primary structure comprises 209 residues: PRA1 family protein B1 (209 aa).

Position 2 is an N-acetylalanine (Ala-2). The next 5 membrane-spanning stretches (helical) occupy residues 73–93 (LAYFKVNYVAIVSLVLAFSLF), 95–115 (HPLSLLVLIGLLGGWMFLYLF), 133–153 (ETLLALVLSTIVVVFMTSVGS), 154–174 (LLTSALMIGVAIVCVHGAFVV), and 185–205 (PANAGLLSFLGGSATSAAAAV).

Belongs to the PRA1 family. In terms of assembly, can form homodimer. Interacts with PRA1B2, PRA1B3, PRA1B4, PRA1B5, PRA1B6 and PRA1E.

The protein resides in the endosome membrane. May be involved in both secretory and endocytic intracellular trafficking in the endosomal/prevacuolar compartments. The chain is PRA1 family protein B1 (PRA1B1) from Arabidopsis thaliana (Mouse-ear cress).